A 449-amino-acid chain; its full sequence is Glucose-6-phosphate isomerase (449 aa).

The active-site Proton donor is Glu291. Catalysis depends on residues His312 and Lys426.

The protein belongs to the GPI family.

It is found in the cytoplasm. It catalyses the reaction alpha-D-glucose 6-phosphate = beta-D-fructose 6-phosphate. It participates in carbohydrate biosynthesis; gluconeogenesis. It functions in the pathway carbohydrate degradation; glycolysis; D-glyceraldehyde 3-phosphate and glycerone phosphate from D-glucose: step 2/4. Catalyzes the reversible isomerization of glucose-6-phosphate to fructose-6-phosphate. This chain is Glucose-6-phosphate isomerase, found in Streptococcus pyogenes serotype M3 (strain ATCC BAA-595 / MGAS315).